Reading from the N-terminus, the 950-residue chain is UPF0182 protein P9303_14611 (950 aa).

A run of 9 helical transmembrane segments spans residues L20–F40, W53–W73, L102–L122, I141–N161, C173–I193, F209–V229, C259–L279, S308–Q328, and L335–V355.

Belongs to the UPF0182 family.

It is found in the cell membrane. The polypeptide is UPF0182 protein P9303_14611 (Prochlorococcus marinus (strain MIT 9303)).